A 113-amino-acid polypeptide reads, in one-letter code: Nucleoid-associated protein SAV_4556 (113 aa).

The protein belongs to the YbaB/EbfC family. As to quaternary structure, homodimer.

The protein resides in the cytoplasm. It is found in the nucleoid. In terms of biological role, binds to DNA and alters its conformation. May be involved in regulation of gene expression, nucleoid organization and DNA protection. This is Nucleoid-associated protein SAV_4556 from Streptomyces avermitilis (strain ATCC 31267 / DSM 46492 / JCM 5070 / NBRC 14893 / NCIMB 12804 / NRRL 8165 / MA-4680).